Here is a 440-residue protein sequence, read N- to C-terminus: Histidinol dehydrogenase (440 aa).

Residues Tyr134, Gln196, and Asn219 each contribute to the NAD(+) site. Ser242, Gln264, and His267 together coordinate substrate. Zn(2+) contacts are provided by Gln264 and His267. Residues Glu332 and His333 each act as proton acceptor in the active site. His333, Asp366, Glu420, and His425 together coordinate substrate. Asp366 is a binding site for Zn(2+). His425 is a Zn(2+) binding site.

Belongs to the histidinol dehydrogenase family. It depends on Zn(2+) as a cofactor.

It carries out the reaction L-histidinol + 2 NAD(+) + H2O = L-histidine + 2 NADH + 3 H(+). Its pathway is amino-acid biosynthesis; L-histidine biosynthesis; L-histidine from 5-phospho-alpha-D-ribose 1-diphosphate: step 9/9. In terms of biological role, catalyzes the sequential NAD-dependent oxidations of L-histidinol to L-histidinaldehyde and then to L-histidine. In Prochlorococcus marinus (strain SARG / CCMP1375 / SS120), this protein is Histidinol dehydrogenase.